A 126-amino-acid chain; its full sequence is MDVIQPCIKIQVHTKYIEEQSNPELQRYVFAYVITIKNLSQQTVQLISRRWLITDSNGKQMTVEGEGVVGQQPFISGSDEYTYSSGTALETPVGVMQGHYILLDEKGNEFITEIDPFRLAIPNVLN.

An ApaG domain is found at 2 to 126 (DVIQPCIKIQ…FRLAIPNVLN (125 aa)).

In Vibrio campbellii (strain ATCC BAA-1116), this protein is Protein ApaG.